A 110-amino-acid polypeptide reads, in one-letter code: Minor capsid protein VP2 (110 aa).

This sequence belongs to the vesivirus VP2 protein family. Homooligomer. The portal-like structure consists in 12 copies of VP2. Interacts with capsid protein VP1.

It is found in the virion. The protein localises to the host cytoplasm. Functionally, minor structural protein that forms a portal-like structure at a unique three-fold axis of symmetry, following binding to the host receptor. The channel formed by VP2 may allow the delivery of the viral genome through the host endosomal membrane. This Otariidae (fur seals &amp; sea lions) protein is Minor capsid protein VP2.